Here is a 216-residue protein sequence, read N- to C-terminus: ATP phosphoribosyltransferase (216 aa).

This sequence belongs to the ATP phosphoribosyltransferase family. Short subfamily. Heteromultimer composed of HisG and HisZ subunits.

It localises to the cytoplasm. It carries out the reaction 1-(5-phospho-beta-D-ribosyl)-ATP + diphosphate = 5-phospho-alpha-D-ribose 1-diphosphate + ATP. It functions in the pathway amino-acid biosynthesis; L-histidine biosynthesis; L-histidine from 5-phospho-alpha-D-ribose 1-diphosphate: step 1/9. Its function is as follows. Catalyzes the condensation of ATP and 5-phosphoribose 1-diphosphate to form N'-(5'-phosphoribosyl)-ATP (PR-ATP). Has a crucial role in the pathway because the rate of histidine biosynthesis seems to be controlled primarily by regulation of HisG enzymatic activity. This Lachnospira eligens (strain ATCC 27750 / DSM 3376 / VPI C15-48 / C15-B4) (Eubacterium eligens) protein is ATP phosphoribosyltransferase.